The following is a 141-amino-acid chain: Hemoglobin subunit alpha (141 aa).

One can recognise a Globin domain in the interval 1–141; it reads VLSATDKANV…VATVLTSKYR (141 aa). Serine 3 carries the post-translational modification Phosphoserine. An N6-succinyllysine mark is found at lysine 7 and lysine 11. The residue at position 16 (lysine 16) is an N6-acetyllysine; alternate. N6-succinyllysine; alternate is present on lysine 16. Tyrosine 24 carries the post-translational modification Phosphotyrosine. Lysine 40 carries the N6-succinyllysine modification. Histidine 58 provides a ligand contact to O2. A heme b-binding site is contributed by histidine 87. Serine 102 carries the post-translational modification Phosphoserine. Threonine 108 is subject to Phosphothreonine. A Phosphoserine modification is found at serine 124. Threonine 134 and threonine 137 each carry phosphothreonine. Position 138 is a phosphoserine (serine 138).

The protein belongs to the globin family. As to quaternary structure, heterotetramer of two alpha chains and two beta chains. In terms of tissue distribution, red blood cells.

Its function is as follows. Involved in oxygen transport from the lung to the various peripheral tissues. Functionally, hemopressin acts as an antagonist peptide of the cannabinoid receptor CNR1. Hemopressin-binding efficiently blocks cannabinoid receptor CNR1 and subsequent signaling. This is Hemoglobin subunit alpha (HBA) from Erinaceus europaeus (Western European hedgehog).